The following is a 173-amino-acid chain: Disulfide bond formation protein B (173 aa).

At 1–11 (MNALQWSFRAQ) the chain is on the cytoplasmic side. Residues 12 to 28 (CLTGFLFCTGLLAYAIF) traverse the membrane as a helical segment. Topologically, residues 29-46 (LQLHQGLEPCPLCIFQRI) are periplasmic. Cysteines 38 and 41 form a disulfide. A helical membrane pass occupies residues 47–63 (AFAVLGILFLIAGLYNS). The Cytoplasmic segment spans residues 64–70 (SNVYTRK). A helical membrane pass occupies residues 71 to 88 (AYGLLIFLTAIIGTGIAG). The Periplasmic segment spans residues 89-145 (RHVWVQLMPHNTISSCGSPLSFLSETMGPFEVFRTVLTGTSNCGNIDWRFLGLSMPM). Cys-104 and Cys-131 are disulfide-bonded. The helical transmembrane segment at 146 to 164 (WSMFWFVALALLGLLVGFK) threads the bilayer. Residues 165–173 (AERRKPLFS) lie on the Cytoplasmic side of the membrane.

The protein belongs to the DsbB family.

It is found in the cell inner membrane. In terms of biological role, required for disulfide bond formation in some periplasmic proteins. Acts by oxidizing the DsbA protein. This is Disulfide bond formation protein B from Xylella fastidiosa (strain Temecula1 / ATCC 700964).